We begin with the raw amino-acid sequence, 489 residues long: Mitochondrial distribution and morphology protein 10 (489 aa).

Belongs to the MDM10 family. Component of the ER-mitochondria encounter structure (ERMES) or MDM complex, composed of MMM1, MDM10, MDM12 and MDM34. Associates with the mitochondrial outer membrane sorting assembly machinery SAM(core) complex.

It is found in the mitochondrion outer membrane. Its function is as follows. Component of the ERMES/MDM complex, which serves as a molecular tether to connect the endoplasmic reticulum and mitochondria. Components of this complex are involved in the control of mitochondrial shape and protein biogenesis and may function in phospholipid exchange. MDM10 is involved in the late assembly steps of the general translocase of the mitochondrial outer membrane (TOM complex). Functions in the TOM40-specific route of the assembly of outer membrane beta-barrel proteins, including the association of TOM40 with the receptor TOM22 and small TOM proteins. Can associate with the SAM(core) complex as well as the MDM12-MMM1 complex, both involved in late steps of the major beta-barrel assembly pathway, that is responsible for biogenesis of all outer membrane beta-barrel proteins. May act as a switch that shuttles between both complexes and channels precursor proteins into the TOM40-specific pathway. Plays a role in mitochondrial morphology and in the inheritance of mitochondria. The sequence is that of Mitochondrial distribution and morphology protein 10 from Arthroderma otae (strain ATCC MYA-4605 / CBS 113480) (Microsporum canis).